A 65-amino-acid polypeptide reads, in one-letter code: Large ribosomal subunit protein bL35 (65 aa).

Belongs to the bacterial ribosomal protein bL35 family.

This chain is Large ribosomal subunit protein bL35, found in Stenotrophomonas maltophilia (strain R551-3).